A 600-amino-acid polypeptide reads, in one-letter code: ATP-dependent RNA helicase DDX55 (600 aa).

The Q motif motif lies at 9–37; the sequence is WESLPVPLHPQVLGALRELGFPYMTPVQS. The Helicase ATP-binding domain occupies 40–223; it reads IPLFMRNKDV…RAGLRNPVRV (184 aa). 53–60 provides a ligand contact to ATP; sequence AVTGSGKT. A DEAD box motif is present at residues 171-174; it reads DEAD. Residues 254–402 enclose the Helicase C-terminal domain; that stretch reads KFNQLVHFLR…EMKPQRNTAD (149 aa). Residues 500–513 show a composition bias toward basic and acidic residues; sequence EQQRREKTENEGRR. The segment at 500–550 is disordered; sequence EQQRREKTENEGRRKFIKNKAWSKQKAKKEKKKKMNEKRKREEGSDIEDED. The span at 514-537 shows a compositional bias: basic residues; sequence KFIKNKAWSKQKAKKEKKKKMNEK. Residues 533–562 are important for nuclear localization; the sequence is KMNEKRKREEGSDIEDEDMEELLNDTRLLK. A phosphoserine mark is found at serine 544 and serine 594.

Belongs to the DEAD box helicase family. DDX55/SPB4 subfamily. In terms of assembly, interacts with 28S rRNA. Interacts with double-stranded RNA substrates in vitro; the interaction stimulates ATPase activity.

It localises to the nucleus. The protein resides in the nucleoplasm. The enzyme catalyses ATP + H2O = ADP + phosphate + H(+). Functionally, probable ATP-binding RNA helicase. Has ATPase activity and is involved in the maturation of precursor large subunit rRNAs. The polypeptide is ATP-dependent RNA helicase DDX55 (Homo sapiens (Human)).